Consider the following 334-residue polypeptide: Ribosomal lysine N-methyltransferase 5 (334 aa).

S-adenosyl-L-methionine-binding positions include tryptophan 88, 155-157 (GAG), aspartate 177, tryptophan 227, and methionine 254.

Belongs to the class I-like SAM-binding methyltransferase superfamily. RKM5 family.

Functionally, S-adenosyl-L-methionine-dependent protein-lysine N-methyltransferase that methylates 60S ribosomal protein L1. In Lachancea thermotolerans (strain ATCC 56472 / CBS 6340 / NRRL Y-8284) (Yeast), this protein is Ribosomal lysine N-methyltransferase 5 (RKM5).